The chain runs to 351 residues: Fructose-1,6-bisphosphatase class 1 (351 aa).

Residues Glu94, Asp113, Leu115, and Asp116 each contribute to the Mg(2+) site. Residues 116–119 and Asn207 each bind substrate; that span reads DGSS. Residue Glu279 participates in Mg(2+) binding.

This sequence belongs to the FBPase class 1 family. As to quaternary structure, homotetramer. Requires Mg(2+) as cofactor.

The protein resides in the cytoplasm. It catalyses the reaction beta-D-fructose 1,6-bisphosphate + H2O = beta-D-fructose 6-phosphate + phosphate. Its pathway is carbohydrate biosynthesis; gluconeogenesis. This is Fructose-1,6-bisphosphatase class 1 from Methylobacterium radiotolerans (strain ATCC 27329 / DSM 1819 / JCM 2831 / NBRC 15690 / NCIMB 10815 / 0-1).